Reading from the N-terminus, the 540-residue chain is Glucose-6-phosphate isomerase (540 aa).

Catalysis depends on Glu-346, which acts as the Proton donor. Active-site residues include His-377 and Lys-505.

Belongs to the GPI family.

The protein resides in the cytoplasm. The catalysed reaction is alpha-D-glucose 6-phosphate = beta-D-fructose 6-phosphate. Its pathway is carbohydrate biosynthesis; gluconeogenesis. The protein operates within carbohydrate degradation; glycolysis; D-glyceraldehyde 3-phosphate and glycerone phosphate from D-glucose: step 2/4. Its function is as follows. Catalyzes the reversible isomerization of glucose-6-phosphate to fructose-6-phosphate. This chain is Glucose-6-phosphate isomerase, found in Francisella philomiragia subsp. philomiragia (strain ATCC 25017 / CCUG 19701 / FSC 153 / O#319-036).